The sequence spans 309 residues: Porphobilinogen deaminase (309 aa).

At Cys-240 the chain carries S-(dipyrrolylmethanemethyl)cysteine.

The protein belongs to the HMBS family. As to quaternary structure, monomer. It depends on dipyrromethane as a cofactor.

It carries out the reaction 4 porphobilinogen + H2O = hydroxymethylbilane + 4 NH4(+). The protein operates within porphyrin-containing compound metabolism; protoporphyrin-IX biosynthesis; coproporphyrinogen-III from 5-aminolevulinate: step 2/4. Its function is as follows. Tetrapolymerization of the monopyrrole PBG into the hydroxymethylbilane pre-uroporphyrinogen in several discrete steps. This chain is Porphobilinogen deaminase, found in Chromobacterium violaceum (strain ATCC 12472 / DSM 30191 / JCM 1249 / CCUG 213 / NBRC 12614 / NCIMB 9131 / NCTC 9757 / MK).